We begin with the raw amino-acid sequence, 370 residues long: Trans-enoyl reductase xenG (370 aa).

The disordered stretch occupies residues 1–32 (MASTGLPQLPPSQKAVIQSEKTPGAFEVSENR). NADP(+)-binding positions include 54–57 (CDWK), 177–180 (STAS), 200–203 (SPKN), Y218, 265–266 (FE), and 356–357 (VS).

It belongs to the zinc-containing alcohol dehydrogenase family. In terms of assembly, monomer.

Its pathway is mycotoxin biosynthesis. Functionally, trans-enoyl reductase; part of the gene cluster that mediates the biosynthesis of xenoacremones such as xenoacremone A, a compound that shows inhibitory activity toward the PI3K/AKT signaling pathway and which has the ability to induce apoptosis of A549 lung cancer cells. Within the pathway, cooperation of the hybrid PKS-NRPS xenE and the trans-acting enoyl reductase xenG is responsible for the formation of the reduced tyrosine-nonaketide derivative. The alpha/beta hydrolase xenA then accelerates intramolecular nucleophilic attack to give a pyrrolidone derivative. Subsequently, three enzymes, xenF, xenD, and xenC, coordinately participate in the conversion to xenoacremone B. XenF catalyzes sigmatropic rearrangement to form an A-ring, which leads to an unusual intermediate with a hexane ring, which is required for the formation of the tricarbocyclic product. Epoxidation catalyzed by xenD and the formation of the paracyclophane ether catalyzed by xenC initiate a spontaneous intramolecular Diels-Alder (IMDA) reaction to yield xenoacremone B. Spontaneous hydration of xenoacremone B leads to the formation of xenoacremone A, which undergoes subsequent methylation to afford xenoacremone C. The protein is Trans-enoyl reductase xenG of Xenoacremonium sinensis (Endophyte fungus).